The following is a 153-amino-acid chain: Nucleoside diphosphate kinase (153 aa).

The ATP site is built by lysine 13, phenylalanine 61, arginine 89, threonine 95, arginine 106, and asparagine 116. Histidine 119 (pros-phosphohistidine intermediate) is an active-site residue.

It belongs to the NDK family. In terms of assembly, homohexamer. It depends on Mg(2+) as a cofactor.

The protein localises to the cytoplasm. It catalyses the reaction a 2'-deoxyribonucleoside 5'-diphosphate + ATP = a 2'-deoxyribonucleoside 5'-triphosphate + ADP. It carries out the reaction a ribonucleoside 5'-diphosphate + ATP = a ribonucleoside 5'-triphosphate + ADP. Functionally, major role in the synthesis of nucleoside triphosphates other than ATP. The ATP gamma phosphate is transferred to the NDP beta phosphate via a ping-pong mechanism, using a phosphorylated active-site intermediate. The chain is Nucleoside diphosphate kinase (NDK) from Brugia malayi (Filarial nematode worm).